A 319-amino-acid polypeptide reads, in one-letter code: Probable cystathionine gamma-synthase (319 aa).

The residue at position 197 (K197) is an N6-(pyridoxal phosphate)lysine.

The protein belongs to the trans-sulfuration enzymes family. In terms of assembly, homotetramer. Requires pyridoxal 5'-phosphate as cofactor.

The protein localises to the cytoplasm. It catalyses the reaction O-succinyl-L-homoserine + L-cysteine = L,L-cystathionine + succinate + H(+). In terms of biological role, catalyzes the formation of L-cystathionine from O-succinyl-L-homoserine (OSHS) and L-cysteine, via a gamma-replacement reaction. In the absence of thiol, catalyzes gamma-elimination to form 2-oxobutanoate, succinate and ammonia. The protein is Probable cystathionine gamma-synthase (metB) of Herpetosiphon aurantiacus (Herpetosiphon giganteus).